Reading from the N-terminus, the 693-residue chain is Elongation factor G (693 aa).

The region spanning 8–282 (KNTRNIGIMA…AVIDYLPSPL (275 aa)) is the tr-type G domain. Residues 17–24 (AHIDAGKT), 81–85 (DTPGH), and 135–138 (NKMD) contribute to the GTP site.

It belongs to the TRAFAC class translation factor GTPase superfamily. Classic translation factor GTPase family. EF-G/EF-2 subfamily.

The protein localises to the cytoplasm. Catalyzes the GTP-dependent ribosomal translocation step during translation elongation. During this step, the ribosome changes from the pre-translocational (PRE) to the post-translocational (POST) state as the newly formed A-site-bound peptidyl-tRNA and P-site-bound deacylated tRNA move to the P and E sites, respectively. Catalyzes the coordinated movement of the two tRNA molecules, the mRNA and conformational changes in the ribosome. The protein is Elongation factor G of Staphylococcus intermedius.